The sequence spans 91 residues: Small ribosomal subunit protein uS15c (91 aa).

It belongs to the universal ribosomal protein uS15 family. As to quaternary structure, part of the 30S ribosomal subunit.

It localises to the plastid. It is found in the chloroplast. This is Small ribosomal subunit protein uS15c (rps15) from Adiantum capillus-veneris (Maidenhair fern).